A 182-amino-acid polypeptide reads, in one-letter code: ATP synthase subunit b 1 (182 aa).

A helical membrane pass occupies residues 24–44; sequence FADPAFWVSIAFLMVVGFVYI.

The protein belongs to the ATPase B chain family. In terms of assembly, F-type ATPases have 2 components, F(1) - the catalytic core - and F(0) - the membrane proton channel. F(1) has five subunits: alpha(3), beta(3), gamma(1), delta(1), epsilon(1). F(0) has three main subunits: a(1), b(2) and c(10-14). The alpha and beta chains form an alternating ring which encloses part of the gamma chain. F(1) is attached to F(0) by a central stalk formed by the gamma and epsilon chains, while a peripheral stalk is formed by the delta and b chains.

The protein localises to the cell inner membrane. Its function is as follows. F(1)F(0) ATP synthase produces ATP from ADP in the presence of a proton or sodium gradient. F-type ATPases consist of two structural domains, F(1) containing the extramembraneous catalytic core and F(0) containing the membrane proton channel, linked together by a central stalk and a peripheral stalk. During catalysis, ATP synthesis in the catalytic domain of F(1) is coupled via a rotary mechanism of the central stalk subunits to proton translocation. In terms of biological role, component of the F(0) channel, it forms part of the peripheral stalk, linking F(1) to F(0). This chain is ATP synthase subunit b 1, found in Rhodospirillum rubrum (strain ATCC 11170 / ATH 1.1.1 / DSM 467 / LMG 4362 / NCIMB 8255 / S1).